A 220-amino-acid polypeptide reads, in one-letter code: Ras-related protein Rab-3A (220 aa).

Residues Ser31, Ser32, Val33, Gly34, Lys35, Thr36, Ser37, Thr48, Pro49, Ser53, and Thr54 each coordinate GTP. Mg(2+) is bound at residue Thr36. A Switch 1 motif is present at residues 49–58; the sequence is PAFVSTVGID. The Mg(2+) site is built by Thr54 and Asp77. Residue Gly80 coordinates GTP. The short motif at 80 to 96 is the Switch 2 element; sequence GQERYRTITTAYYRGAM. Residue Thr86 is modified to Phosphothreonine; by LRRK2. GTP contacts are provided by Asn135, Lys136, Asp138, Ala166, and Lys167. Phosphoserine occurs at positions 188 and 190. The disordered stretch occupies residues 194-220; sequence ADPAVTGAKQGPQLSDQQVPPHQDCAC. 2 S-geranylgeranyl cysteine lipidation sites follow: Cys218 and Cys220. A Cysteine methyl ester modification is found at Cys220.

Belongs to the small GTPase superfamily. Rab family. Interacts with RIMS1 and RIMS2. Interacts with Rabphilin-3A/RPH3A and Rab effector Noc2/RPH3AL. Interacts with SYTL4. Interacts with RAB3IP. Interacts with SGSM1 and SGSM3. Interacts with SYT1. Interacts with MYH9; this interaction is essential for lysosome exocytosis and plasma membrane repair. Interacts with STXBP1; this interaction promotes RAB3A dissociation from the vesicle membrane. Interacts with SNCA. The GTP-bound form interacts with REP15. Interacts with GDI1, GDI2, CHM and CHML; phosphorylation at Thr-86 disrupts these interactions. Interacts with MADD (via uDENN domain); the GTP-bound form is preferred for interaction. Mg(2+) is required as a cofactor. Phosphorylation of Thr-86 in the switch II region by LRRK2 prevents the association of RAB regulatory proteins, including CHM, CHML and RAB GDP dissociation inhibitors GDI1 and GDI2. Specifically expressed in brain.

The protein resides in the cytoplasm. It localises to the cytosol. It is found in the lysosome. Its subcellular location is the cytoplasmic vesicle. The protein localises to the secretory vesicle. The protein resides in the cell projection. It localises to the axon. It is found in the cell membrane. Its subcellular location is the presynapse. The protein localises to the postsynapse. The enzyme catalyses GTP + H2O = GDP + phosphate + H(+). Its activity is regulated as follows. Regulated by guanine nucleotide exchange factors (GEFs) including RAB3IL1 and MADD which promote the exchange of bound GDP for free GTP. Regulated by GTPase activating proteins (GAPs) including RAB3GAP1 and TBC1D10B which increase the GTP hydrolysis activity. Inhibited by GDP dissociation inhibitors (GDIs) which prevent Rab-GDP dissociation. Its function is as follows. The small GTPases Rab are key regulators of intracellular membrane trafficking, from the formation of transport vesicles to their fusion with membranes. Rabs cycle between an inactive GDP-bound form and an active GTP-bound form that is able to recruit to membranes different sets of downstream effectors directly responsible for vesicle formation, movement, tethering and fusion. RAB3A plays a central role in regulated exocytosis and secretion. Controls the recruitment, tethering and docking of secretory vesicles to the plasma membrane. Upon stimulation, switches to its active GTP-bound form, cycles to vesicles and recruits effectors such as RIMS1, RIMS2, Rabphilin-3A/RPH3A, RPH3AL or SYTL4 to help the docking of vesicules onto the plasma membrane. Upon GTP hydrolysis by GTPase-activating protein, dissociates from the vesicle membrane allowing the exocytosis to proceed. Stimulates insulin secretion through interaction with RIMS2 or RPH3AL effectors in pancreatic beta cells. Regulates calcium-dependent lysosome exocytosis and plasma membrane repair (PMR) via the interaction with 2 effectors, SYTL4 and myosin-9/MYH9. Acts as a positive regulator of acrosome content secretion in sperm cells by interacting with RIMS1. Also plays a role in the regulation of dopamine release by interacting with synaptotagmin I/SYT. This chain is Ras-related protein Rab-3A, found in Homo sapiens (Human).